The chain runs to 467 residues: ATP synthase subunit beta (467 aa).

An ATP-binding site is contributed by 156 to 163 (GGAGVGKT).

This sequence belongs to the ATPase alpha/beta chains family. F-type ATPases have 2 components, CF(1) - the catalytic core - and CF(0) - the membrane proton channel. CF(1) has five subunits: alpha(3), beta(3), gamma(1), delta(1), epsilon(1). CF(0) has three main subunits: a(1), b(2) and c(9-12). The alpha and beta chains form an alternating ring which encloses part of the gamma chain. CF(1) is attached to CF(0) by a central stalk formed by the gamma and epsilon chains, while a peripheral stalk is formed by the delta and b chains.

It localises to the cell inner membrane. The enzyme catalyses ATP + H2O + 4 H(+)(in) = ADP + phosphate + 5 H(+)(out). Its function is as follows. Produces ATP from ADP in the presence of a proton gradient across the membrane. The catalytic sites are hosted primarily by the beta subunits. This Cupriavidus pinatubonensis (strain JMP 134 / LMG 1197) (Cupriavidus necator (strain JMP 134)) protein is ATP synthase subunit beta.